Here is a 185-residue protein sequence, read N- to C-terminus: UPF0397 protein CPR_1556 (185 aa).

5 helical membrane passes run 11 to 31 (IVAIGIGSAVFMILGRFGSLP), 44 to 64 (AFLSLMALLYGPLAGFLIGFI), 71 to 91 (IVFFGSPWISWVFASGIVGLI), 111 to 131 (IFMFNLIQIIANGVAWFLVAP), and 149 to 169 (GVIGGISNMITVGVLGTVLIS).

Belongs to the UPF0397 family.

Its subcellular location is the cell membrane. This is UPF0397 protein CPR_1556 from Clostridium perfringens (strain SM101 / Type A).